Consider the following 475-residue polypeptide: Zinc finger protein 296 (475 aa).

The interval 1 to 78 (MSRRKAGSAP…SPGPMPAGAA (78 aa)) is disordered. Lys-35 is covalently cross-linked (Glycyl lysine isopeptide (Lys-Gly) (interchain with G-Cter in SUMO2)). 3 C2H2-type zinc fingers span residues 157-180 (LSCL…QWDH), 231-253 (PTCP…MRSH), and 259-281 (YACD…KKTH). The disordered stretch occupies residues 275 to 385 (NRHKKTHRQV…KSGGKSRGPG (111 aa)). Low complexity-rich tracts occupy residues 295 to 313 (SQEQ…AAAP) and 326 to 338 (GAAA…EPGA). Gly residues predominate over residues 339 to 351 (PGSGAQAGPGGDT). Over residues 354-367 (AITTEQRTDPANSQ) the composition is skewed to polar residues. 3 consecutive C2H2-type zinc fingers follow at residues 386-408 (GSCE…RRSH), 414-436 (YTCE…RRMH), and 445-468 (FECP…RQKH).

This sequence belongs to the krueppel C2H2-type zinc-finger protein family. Interacts with KLF4.

The protein localises to the nucleus. In terms of biological role, may be a transcriptional corepressor with KLF4. This chain is Zinc finger protein 296 (ZNF296), found in Homo sapiens (Human).